The chain runs to 185 residues: Biogenesis of lysosome-related organelles complex 1 subunit 5 (185 aa).

Positions 1–25 are disordered; it reads MSGGGTETPVACDAAQGGKKRDSLG. Position 2 is an N-acetylserine (Ser-2).

Belongs to the BLOC1S5 family. Octamer composed of one copy each BLOC1S1, BLOC1S2, BLOC1S3, BLOC1S4, BLOC1S5, BLOC1S6, DTNBP1/BLOC1S7 and SNAPIN/BLOC1S8. Component of the biogenesis of lysosome-related organelles complex 1 (BLOC-1) composed of BLOC1S1, BLOC1S2, BLOC1S3, BLOC1S4, BLOC1S5, BLOC1S6, DTNBP1/BLOC1S7 and SNAPIN/BLOC1S8. The BLOC-1 complex associates with the AP-3 protein complex and membrane protein cargos. Interacts with BLOC1S4, BLOC1S6, DTNBP1/BLOC1S7 and PI4K2A. As to expression, detected in heart, brain, spleen, lung, kidney and testis.

In terms of biological role, component of the BLOC-1 complex, a complex that is required for normal biogenesis of lysosome-related organelles (LRO), such as platelet dense granules and melanosomes. In concert with the AP-3 complex, the BLOC-1 complex is required to target membrane protein cargos into vesicles assembled at cell bodies for delivery into neurites and nerve terminals. The BLOC-1 complex, in association with SNARE proteins, is also proposed to be involved in neurite extension. Plays a role in intracellular vesicle trafficking. The polypeptide is Biogenesis of lysosome-related organelles complex 1 subunit 5 (Bloc1s5) (Mus musculus (Mouse)).